The primary structure comprises 99 residues: L-rhamnose mutarotase (99 aa).

A substrate-binding site is contributed by tyrosine 18. Residue histidine 22 is the Proton donor of the active site. Substrate contacts are provided by residues tyrosine 41 and 76-77 (WW).

This sequence belongs to the rhamnose mutarotase family. Homodimer.

It localises to the cytoplasm. The catalysed reaction is alpha-L-rhamnose = beta-L-rhamnose. Its pathway is carbohydrate metabolism; L-rhamnose metabolism. In terms of biological role, involved in the anomeric conversion of L-rhamnose. In Shigella boydii serotype 18 (strain CDC 3083-94 / BS512), this protein is L-rhamnose mutarotase.